The sequence spans 181 residues: Large ribosomal subunit protein uL6 (181 aa).

It belongs to the universal ribosomal protein uL6 family. As to quaternary structure, part of the 50S ribosomal subunit.

This protein binds to the 23S rRNA, and is important in its secondary structure. It is located near the subunit interface in the base of the L7/L12 stalk, and near the tRNA binding site of the peptidyltransferase center. The sequence is that of Large ribosomal subunit protein uL6 from Coprothermobacter proteolyticus (strain ATCC 35245 / DSM 5265 / OCM 4 / BT).